The sequence spans 815 residues: uncharacterized protein (815 aa).

A signal peptide spans 1-25; that stretch reads MVVMKKKRILIVSAIVLLFLTVASA. The next 6 membrane-spanning stretches (helical) occupy residues 127 to 147, 157 to 177, 311 to 331, 333 to 353, 372 to 392, and 401 to 421; these read FGEA…CVRG, ILFI…GYYM, SFIA…LAFF, FLLQ…FILA, VYLL…TCFI, and GFGM…IGFH. Residues 483–815 are disordered; it reads KDGSNADGVT…DRLRRDERTR (333 aa). A compositionally biased stretch (polar residues) spans 513 to 543; the sequence is HAISRTPQKETANGIANHNSRSLKRNPQTLS. Composition is skewed to basic and acidic residues over residues 544-563 and 599-614; these read KEQE…ENKQ and QDKK…KEYV. Polar residues predominate over residues 619–630; the sequence is KQPNNQQQTDDA. Residues 648 to 658 are compositionally biased toward basic and acidic residues; that stretch reads ENEKDTERTDQ. Residues 665 to 678 are compositionally biased toward polar residues; sequence EQNQNLETDQQQDF. Basic and acidic residues predominate over residues 696–705; sequence KTAEIKRSDQ. The span at 720 to 732 shows a compositional bias: polar residues; it reads SPQSTKVENQPIA. Positions 734 to 757 are enriched in basic and acidic residues; sequence NERKIRPSEPAKVHSDGIRVDEKQ. Polar residues predominate over residues 773–793; it reads PSSQTIKRTEQSVNSFDQVSL. The span at 796 to 815 shows a compositional bias: basic and acidic residues; sequence IARRSSSKVEDRLRRDERTR.

The protein resides in the cell membrane. This is an uncharacterized protein from Bacillus subtilis (strain 168).